The following is a 215-amino-acid chain: Cytochrome b6 (215 aa).

The chain crosses the membrane as a helical span at residues 32 to 52 (IFYCLGGITLTCFLVQVATGF). Cys35 is a binding site for heme c. Heme b is bound by residues His86 and His100. The next 3 membrane-spanning stretches (helical) occupy residues 90 to 110 (ASMMVLMMILHVFRVYLTGGF), 116 to 136 (LTWVTGVVLAVLTASFGVTGY), and 186 to 206 (LHTFVLPLVSAVFMLIHFLMI). Residues His187 and His202 each coordinate heme b.

This sequence belongs to the cytochrome b family. PetB subfamily. In terms of assembly, the 4 large subunits of the cytochrome b6-f complex are cytochrome b6, subunit IV (17 kDa polypeptide, PetD), cytochrome f and the Rieske protein, while the 4 small subunits are PetG, PetL, PetM and PetN. The complex functions as a dimer. Requires heme b as cofactor. It depends on heme c as a cofactor.

It is found in the plastid. The protein localises to the chloroplast thylakoid membrane. Component of the cytochrome b6-f complex, which mediates electron transfer between photosystem II (PSII) and photosystem I (PSI), cyclic electron flow around PSI, and state transitions. This chain is Cytochrome b6, found in Pelargonium hortorum (Common geranium).